We begin with the raw amino-acid sequence, 663 residues long: Drug sensory protein A (663 aa).

Helical transmembrane passes span 32-52 (LMAA…FWAV), 165-185 (VFIP…GINP), and 199-219 (VTIA…VFNA). The 53-residue stretch at 220–272 (LTITQPIKELLLGVKNIAAGNFKQRITLPFGGELGELIVNFNEMAERLERYEA) folds into the HAMP domain. Positions 281 to 351 (EKAKLDTLVS…QPLRELAADQ (71 aa)) constitute a PAS domain. The 228-residue stretch at 429–656 (NVSHELRTPL…TFWFDLAVYQ (228 aa)) folds into the Histidine kinase domain. Residue His432 is modified to Phosphohistidine; by autocatalysis.

The protein resides in the cell membrane. The enzyme catalyses ATP + protein L-histidine = ADP + protein N-phospho-L-histidine.. The chain is Drug sensory protein A (dspA) from Synechocystis sp. (strain ATCC 27184 / PCC 6803 / Kazusa).